Reading from the N-terminus, the 70-residue chain is Large ribosomal subunit protein uL29 (70 aa).

This sequence belongs to the universal ribosomal protein uL29 family.

The chain is Large ribosomal subunit protein uL29 from Clostridium botulinum (strain Alaska E43 / Type E3).